The chain runs to 107 residues: U1-lycotoxin-Ls1b (107 aa).

The signal sequence occupies residues 1-20; the sequence is MMKVLVVVALLVTHISYSSS. The propeptide occupies 21-41; sequence EGIDDLEADELLSLMANEQTR. Intrachain disulfides connect Cys-44–Cys-59, Cys-51–Cys-68, Cys-58–Cys-86, and Cys-70–Cys-84.

Belongs to the neurotoxin 19 (CSTX) family. 04 (U1-Lctx) subfamily. As to expression, expressed by the venom gland.

The protein resides in the secreted. This Lycosa singoriensis (Wolf spider) protein is U1-lycotoxin-Ls1b.